The primary structure comprises 843 residues: Protein P (843 aa).

The segment at 1–177 is terminal protein domain (TP); it reads MPLSYQHFRK…FCGSPYSWEQ (177 aa). Residues 178 to 346 form a spacer region; the sequence is ELQHGRLVFQ…YCLSHIVNLL (169 aa). The polymerase/reverse transcriptase domain (RT) stretch occupies residues 347–690; the sequence is EDWGPCTEHG…YMNLYPVARQ (344 aa). Residues 357-600 form the Reverse transcriptase domain; the sequence is EHHIRIPRTP…YSLNFMGYVI (244 aa). 3 residues coordinate Mg(2+): D429, D551, and D552.

This sequence belongs to the hepadnaviridae P protein family.

It carries out the reaction DNA(n) + a 2'-deoxyribonucleoside 5'-triphosphate = DNA(n+1) + diphosphate. The enzyme catalyses Endonucleolytic cleavage to 5'-phosphomonoester.. Its activity is regulated as follows. Activated by host HSP70 and HSP40 in vitro to be able to bind the epsilon loop of the pgRNA. Because deletion of the RNase H region renders the protein partly chaperone-independent, the chaperones may be needed indirectly to relieve occlusion of the RNA-binding site by this domain. Inhibited by several reverse-transcriptase inhibitors: Lamivudine, Adefovir and Entecavir. Multifunctional enzyme that converts the viral RNA genome into dsDNA in viral cytoplasmic capsids. This enzyme displays a DNA polymerase activity that can copy either DNA or RNA templates, and a ribonuclease H (RNase H) activity that cleaves the RNA strand of RNA-DNA heteroduplexes in a partially processive 3'- to 5'-endonucleasic mode. Neo-synthesized pregenomic RNA (pgRNA) are encapsidated together with the P protein, and reverse-transcribed inside the nucleocapsid. Initiation of reverse-transcription occurs first by binding the epsilon loop on the pgRNA genome, and is initiated by protein priming, thereby the 5'-end of (-)DNA is covalently linked to P protein. Partial (+)DNA is synthesized from the (-)DNA template and generates the relaxed circular DNA (RC-DNA) genome. After budding and infection, the RC-DNA migrates in the nucleus, and is converted into a plasmid-like covalently closed circular DNA (cccDNA). The activity of P protein does not seem to be necessary for cccDNA generation, and is presumably released from (+)DNA by host nuclear DNA repair machinery. The chain is Protein P from Homo sapiens (Human).